The sequence spans 422 residues: Histidine--tRNA ligase (422 aa).

This sequence belongs to the class-II aminoacyl-tRNA synthetase family. In terms of assembly, homodimer.

The protein localises to the cytoplasm. The catalysed reaction is tRNA(His) + L-histidine + ATP = L-histidyl-tRNA(His) + AMP + diphosphate + H(+). The protein is Histidine--tRNA ligase of Vibrio vulnificus (strain CMCP6).